The sequence spans 391 residues: S-adenosylmethionine synthase (391 aa).

Residue histidine 14 coordinates ATP. Residue aspartate 16 participates in Mg(2+) binding. Glutamate 42 contacts K(+). L-methionine contacts are provided by glutamate 55 and glutamine 98. A flexible loop region spans residues glutamine 98–glutamate 108. Residues aspartate 172–lysine 174, arginine 238–phenylalanine 239, aspartate 247, arginine 253–lysine 254, alanine 270, and lysine 274 each bind ATP. Position 247 (aspartate 247) interacts with L-methionine. Lysine 278 serves as a coordination point for L-methionine.

The protein belongs to the AdoMet synthase family. In terms of assembly, homotetramer; dimer of dimers. The cofactor is Mg(2+). It depends on K(+) as a cofactor.

It localises to the cytoplasm. The catalysed reaction is L-methionine + ATP + H2O = S-adenosyl-L-methionine + phosphate + diphosphate. It participates in amino-acid biosynthesis; S-adenosyl-L-methionine biosynthesis; S-adenosyl-L-methionine from L-methionine: step 1/1. Functionally, catalyzes the formation of S-adenosylmethionine (AdoMet) from methionine and ATP. The overall synthetic reaction is composed of two sequential steps, AdoMet formation and the subsequent tripolyphosphate hydrolysis which occurs prior to release of AdoMet from the enzyme. The protein is S-adenosylmethionine synthase of Clostridium tetani (strain Massachusetts / E88).